Here is a 337-residue protein sequence, read N- to C-terminus: MSEIRLNKKAYIHNLMQISNKAGGKERVMLVLKDNAYGHGAKLIAAAASEFGIKFCAVKSQSEALEIQRNFEKILILSHIANGDEDQNFIYAINDMKGLNRIKRGTRIHLVIDTNMHRNGLKFSELEAAFGPIKERGLALEGAYTHFRASDEMNADYFVQRQNFKEAKAEILRLCEKFAMPHPIFHSHNSAALERFGEFDDDMVRVGIAQHGYAQFDDSLNLKPVLSLWAQKVSERVLKAGQCVGYGAKFCADKDINIATYDLGYGDGLLRYAGDGELPLANGKAMLGKMSMDSFSCEDAGEWVCVFDDANVWARYFDTINYDILVKLSPNIKRKFV.

The active-site Proton acceptor; specific for D-alanine is the Lys-33. N6-(pyridoxal phosphate)lysine is present on Lys-33. Arg-118 lines the substrate pocket. Residue Tyr-246 is the Proton acceptor; specific for L-alanine of the active site. Residue Met-292 participates in substrate binding.

Belongs to the alanine racemase family. The cofactor is pyridoxal 5'-phosphate.

The enzyme catalyses L-alanine = D-alanine. It functions in the pathway amino-acid biosynthesis; D-alanine biosynthesis; D-alanine from L-alanine: step 1/1. Its function is as follows. Catalyzes the interconversion of L-alanine and D-alanine. May also act on other amino acids. This Campylobacter curvus (strain 525.92) protein is Alanine racemase (alr).